The primary structure comprises 1216 residues: Regulator of telomere elongation helicase 1 (1216 aa).

The region spanning 7–295 (KGVTVDFPFQ…TKVAQQAELH (289 aa)) is the Helicase ATP-binding domain. ATP is bound at residue 42-49 (SPTGTGKT). C144, C162, C171, and C206 together coordinate [4Fe-4S] cluster. The Nuclear localization signal signature appears at 150–166 (KKQESNHMQVHLCRRKV). Positions 249–252 (DEAH) match the DEAH box motif. A Nuclear localization signal motif is present at residues 874–880 (QRGRRRK). Disordered regions lie at residues 978-1018 (GCSS…ATRQ) and 1140-1172 (GPGT…RKTQ). The PIP-box motif lies at 1172-1179 (QSKISSFL).

It belongs to the helicase family. RAD3/XPD subfamily. In terms of assembly, interacts with TERF1. Interacts (via PIP-box) with PCNA; the interaction is direct and essential for suppressing telomere fragility. Interacts with MMS19; the interaction mediates the association of RTEL1 with the cytosolic iron-sulfur protein assembly (CIA) complex. As to expression, highly expressed in adult testis, liver and ovary.

The protein resides in the nucleus. The catalysed reaction is ATP + H2O = ADP + phosphate + H(+). A probable ATP-dependent DNA helicase implicated in telomere-length regulation, DNA repair and the maintenance of genomic stability. Acts as an anti-recombinase to counteract toxic recombination and limit crossover during meiosis. Regulates meiotic recombination and crossover homeostasis by physically dissociating strand invasion events and thereby promotes noncrossover repair by meiotic synthesis dependent strand annealing (SDSA) as well as disassembly of D loop recombination intermediates. Also disassembles T loops and prevents telomere fragility by counteracting telomeric G4-DNA structures, which together ensure the dynamics and stability of the telomere. The protein is Regulator of telomere elongation helicase 1 of Bos taurus (Bovine).